Consider the following 101-residue polypeptide: Small ribosomal subunit protein uS14 (101 aa).

Belongs to the universal ribosomal protein uS14 family. In terms of assembly, part of the 30S ribosomal subunit. Contacts proteins S3 and S10.

Functionally, binds 16S rRNA, required for the assembly of 30S particles and may also be responsible for determining the conformation of the 16S rRNA at the A site. The chain is Small ribosomal subunit protein uS14 from Hydrogenovibrio crunogenus (strain DSM 25203 / XCL-2) (Thiomicrospira crunogena).